A 303-amino-acid polypeptide reads, in one-letter code: Aquaporin NIP1-2 (303 aa).

Residues 1 to 39 (MAGREDGAAAGAMEEGQDSKEVKCESSEDGSSSSSSSRC) form a disordered region. The span at 17–26 (QDSKEVKCES) shows a compositional bias: basic and acidic residues. 2 helical membrane passes run 66 to 86 (ILAE…AVVV) and 91 to 111 (GGAV…MVLV). The short motif at 123-125 (NPA) is the NPA 1 element. A run of 3 helical transmembrane segments spans residues 145–165 (VVAQ…VFGG), 188–208 (AAAL…GVAT), and 212–232 (AIGE…VLFA). The short motif at 241 to 243 (NPA) is the NPA 2 element. The chain crosses the membrane as a helical span at residues 255 to 275 (YGGVWVYVAAPVSGTVCGAWA).

Belongs to the MIP/aquaporin (TC 1.A.8) family. NIP (TC 1.A.8.12) subfamily. In terms of tissue distribution, expressed in roots and leaves, and at lower levels in anthers.

It is found in the membrane. Functionally, aquaporins facilitate the transport of water and small neutral solutes across cell membranes. The chain is Aquaporin NIP1-2 (NIP1-2) from Oryza sativa subsp. japonica (Rice).